The following is a 272-amino-acid chain: NH(3)-dependent NAD(+) synthetase (272 aa).

45–52 is an ATP binding site; sequence GISGGQDS. Position 51 (aspartate 51) interacts with Mg(2+). Arginine 138 lines the deamido-NAD(+) pocket. Threonine 158 provides a ligand contact to ATP. Residue glutamate 163 coordinates Mg(2+). Lysine 171 and aspartate 178 together coordinate deamido-NAD(+). The ATP site is built by lysine 187 and threonine 209. 258–259 contacts deamido-NAD(+); sequence HK.

The protein belongs to the NAD synthetase family. In terms of assembly, homodimer.

It catalyses the reaction deamido-NAD(+) + NH4(+) + ATP = AMP + diphosphate + NAD(+) + H(+). It participates in cofactor biosynthesis; NAD(+) biosynthesis; NAD(+) from deamido-NAD(+) (ammonia route): step 1/1. Functionally, catalyzes the ATP-dependent amidation of deamido-NAD to form NAD. Uses ammonia as a nitrogen source. The chain is NH(3)-dependent NAD(+) synthetase from Bacillus cereus (strain 03BB102).